The primary structure comprises 660 residues: DNA ligase (660 aa).

NAD(+) contacts are provided by residues Asp-33–Asp-37, Ser-82–Leu-83, and Glu-110. Catalysis depends on Lys-112, which acts as the N6-AMP-lysine intermediate. The NAD(+) site is built by Arg-133, Glu-167, Lys-281, and Lys-305. Zn(2+)-binding residues include Cys-396, Cys-399, Cys-412, and Cys-417. The BRCT domain maps to Asp-583–Asp-660.

It belongs to the NAD-dependent DNA ligase family. LigA subfamily. Requires Mg(2+) as cofactor. It depends on Mn(2+) as a cofactor.

It carries out the reaction NAD(+) + (deoxyribonucleotide)n-3'-hydroxyl + 5'-phospho-(deoxyribonucleotide)m = (deoxyribonucleotide)n+m + AMP + beta-nicotinamide D-nucleotide.. DNA ligase that catalyzes the formation of phosphodiester linkages between 5'-phosphoryl and 3'-hydroxyl groups in double-stranded DNA using NAD as a coenzyme and as the energy source for the reaction. It is essential for DNA replication and repair of damaged DNA. The protein is DNA ligase of Borreliella afzelii (strain PKo) (Borrelia afzelii).